The following is a 172-amino-acid chain: MDYFTLFGLPIRYDVDGGLLASRFQDLQRQFHPDRYATSPECERMLAVQLAATINNAYQALKHPLKRAEYMLSLHGFDVNNEQHTMRDTAFLMEQLELREELDTISQRSDADEVLTTFAERLQVMIGTRRSHMRHELDNETWTDAADTVRKLRFLDKLQQQVEELEEQLLDR.

The J domain occupies 2–74 (DYFTLFGLPI…LKRAEYMLSL (73 aa)).

It belongs to the HscB family. Interacts with HscA and stimulates its ATPase activity. Interacts with IscU.

Functionally, co-chaperone involved in the maturation of iron-sulfur cluster-containing proteins. Seems to help targeting proteins to be folded toward HscA. The chain is Co-chaperone protein HscB from Pectobacterium atrosepticum (strain SCRI 1043 / ATCC BAA-672) (Erwinia carotovora subsp. atroseptica).